Here is a 148-residue protein sequence, read N- to C-terminus: Ubiquitin-conjugating enzyme E2 11 (148 aa).

The region spanning 1-147 (MASKRILKEL…ARSWTQKYAM (147 aa)) is the UBC core domain. C85 serves as the catalytic Glycyl thioester intermediate.

It belongs to the ubiquitin-conjugating enzyme family. In terms of assembly, interacts with the E3 ubiquitin-protein ligases MBR1 and MBR2. As to expression, ubiquitously expressed. Mainly in petals.

It carries out the reaction S-ubiquitinyl-[E1 ubiquitin-activating enzyme]-L-cysteine + [E2 ubiquitin-conjugating enzyme]-L-cysteine = [E1 ubiquitin-activating enzyme]-L-cysteine + S-ubiquitinyl-[E2 ubiquitin-conjugating enzyme]-L-cysteine.. The protein operates within protein modification; protein ubiquitination. Its function is as follows. Accepts the ubiquitin from the E1 complex and catalyzes its covalent attachment to other proteins. Mediates the selective degradation of short-lived and abnormal proteins. The chain is Ubiquitin-conjugating enzyme E2 11 (UBC11) from Arabidopsis thaliana (Mouse-ear cress).